The following is a 273-amino-acid chain: Putative phosphoenolpyruvate synthase regulatory protein (273 aa).

153–160 (AVSRAGKT) provides a ligand contact to ADP.

This sequence belongs to the pyruvate, phosphate/water dikinase regulatory protein family. PSRP subfamily.

The catalysed reaction is [pyruvate, water dikinase] + ADP = [pyruvate, water dikinase]-phosphate + AMP + H(+). It carries out the reaction [pyruvate, water dikinase]-phosphate + phosphate + H(+) = [pyruvate, water dikinase] + diphosphate. Bifunctional serine/threonine kinase and phosphorylase involved in the regulation of the phosphoenolpyruvate synthase (PEPS) by catalyzing its phosphorylation/dephosphorylation. This chain is Putative phosphoenolpyruvate synthase regulatory protein, found in Xanthomonas axonopodis pv. citri (strain 306).